The following is a 158-amino-acid chain: Anaerobic ribonucleoside-triphosphate reductase-activating protein (158 aa).

[4Fe-4S] cluster contacts are provided by cysteine 26, cysteine 30, and cysteine 33. S-adenosyl-L-methionine contacts are provided by residues 32-34 (GCY) and glycine 74.

The protein belongs to the organic radical-activating enzymes family. In terms of assembly, forms a tetramer composed of two NrdD and two NrdG subunits. It depends on [4Fe-4S] cluster as a cofactor.

It localises to the cytoplasm. It catalyses the reaction glycyl-[protein] + reduced [flavodoxin] + S-adenosyl-L-methionine = glycin-2-yl radical-[protein] + semiquinone [flavodoxin] + 5'-deoxyadenosine + L-methionine + H(+). In terms of biological role, activation of anaerobic ribonucleoside-triphosphate reductase under anaerobic conditions by generation of an organic free radical, using S-adenosylmethionine and reduced flavodoxin as cosubstrates to produce 5'-deoxy-adenosine. The sequence is that of Anaerobic ribonucleoside-triphosphate reductase-activating protein (nrdG) from Pasteurella multocida (strain Pm70).